The following is a 259-amino-acid chain: Tumor necrosis factor receptor superfamily member 10C (259 aa).

An N-terminal signal peptide occupies residues 1 to 25; the sequence is MARIPKTLKFVVVIVAVLLPVLAYS. TNFR-Cys repeat units follow at residues 29 to 66, 69 to 109, and 110 to 149; these read ARQE…TGAC, CTEG…DTVC, and QCKE…DIQC. Residues 30-45 show a composition bias toward polar residues; that stretch reads RQEEVPQQTVAPQQQR. The interval 30-56 is disordered; it reads RQEEVPQQTVAPQQQRHSFKGEECPAG. Cystine bridges form between Cys-53–Cys-66, Cys-69–Cys-85, Cys-88–Cys-101, Cys-91–Cys-109, Cys-111–Cys-125, Cys-128–Cys-141, and Cys-131–Cys-149. Asn-77 is a glycosylation site (N-linked (GlcNAc...) (high mannose) asparagine). N-linked (GlcNAc...) (high mannose) asparagine glycans are attached at residues Asn-140 and Asn-156. The interval 160–224 is disordered; it reads ETPAAEETMN…TSPGTPAPAA (65 aa). TAPE repeat units lie at residues 162 to 176, 177 to 191, 192 to 206, 207 to 221, and 222 to 236; these read PAAE…GTPA. The segment covering 185–217 has biased composition (low complexity); it reads TSPGTPAPAAEETMTTSPGTPAPAAEETMTTSP. Ala-236 carries GPI-anchor amidated alanine lipidation. The propeptide at 237–259 is removed in mature form; that stretch reads SSHYLSCTIVGIIVLIVLLIVFV.

In terms of processing, N-glycosylated and O-glycosylated. As to expression, higher expression in normal tissues than in tumor cell lines. Highly expressed in peripheral blood lymphocytes, spleen, skeletal muscle, placenta, lung and heart.

Its subcellular location is the cell membrane. Functionally, receptor for the cytotoxic ligand TRAIL. Lacks a cytoplasmic death domain and hence is not capable of inducing apoptosis. May protect cells against TRAIL mediated apoptosis by competing with TRAIL-R1 and R2 for binding to the ligand. This chain is Tumor necrosis factor receptor superfamily member 10C (TNFRSF10C), found in Homo sapiens (Human).